Reading from the N-terminus, the 655-residue chain is p-hydroxybenzoic acid efflux pump subunit AaeB (655 aa).

A run of 11 helical transmembrane segments spans residues 13-33 (FAVK…HFQL), 38-58 (WAVL…GGEP), 69-89 (LRII…ISMI), 93-113 (LLMI…SSLV), 121-141 (WGLS…EPLL), 152-172 (EIVI…PRSI), 370-390 (LFWL…IAVV), 407-427 (FIYG…VIIP), 431-451 (QSML…GIEV), 459-479 (MGAL…TFHF), and 482-502 (FLDS…VILL).

This sequence belongs to the aromatic acid exporter ArAE (TC 2.A.85) family.

It localises to the cell inner membrane. Forms an efflux pump with AaeA. Could function as a metabolic relief valve, allowing to eliminate certain compounds when they accumulate to high levels in the cell. This is p-hydroxybenzoic acid efflux pump subunit AaeB from Salmonella arizonae (strain ATCC BAA-731 / CDC346-86 / RSK2980).